A 115-amino-acid polypeptide reads, in one-letter code: DNA-directed RNA polymerase subunit Rpo4 (115 aa).

The protein belongs to the eukaryotic RPB4 RNA polymerase subunit family. In terms of assembly, part of the RNA polymerase complex. Forms a stalk with Rpo7 that extends from the main structure.

The protein localises to the cytoplasm. The enzyme catalyses RNA(n) + a ribonucleoside 5'-triphosphate = RNA(n+1) + diphosphate. DNA-dependent RNA polymerase (RNAP) catalyzes the transcription of DNA into RNA using the four ribonucleoside triphosphates as substrates. This subunit is less well bound than the others. This Methanocaldococcus jannaschii (strain ATCC 43067 / DSM 2661 / JAL-1 / JCM 10045 / NBRC 100440) (Methanococcus jannaschii) protein is DNA-directed RNA polymerase subunit Rpo4.